The sequence spans 612 residues: UPF0329 protein ECU05_1680/ECU11_0050 (612 aa).

Residues 304-330 (RQRREMEKKEEEKKKEEEKKKEEEKRK) show a composition bias toward basic and acidic residues. The tract at residues 304–424 (RQRREMEKKE…RKRYKIHRRV (121 aa)) is disordered. Residues 331–349 (EEKKKKKEEKKEEKKKKKE) show a composition bias toward basic residues. Residues 350–388 (EKKEEKKEEKKEEKKEEKKEEKKEEKKEEKSGKSLREGE) show a composition bias toward basic and acidic residues.

This sequence belongs to the UPF0329 family.

This is UPF0329 protein ECU05_1680/ECU11_0050 from Encephalitozoon cuniculi (strain GB-M1) (Microsporidian parasite).